Here is a 179-residue protein sequence, read N- to C-terminus: X-linked lymphocyte-regulated protein 5C (179 aa).

Residues 1-11 (MSNKEQKDMKK) are compositionally biased toward basic and acidic residues. The interval 1–75 (MSNKEQKDMK…MQDFKGDDGT (75 aa)) is disordered. Positions 42–53 (GTSGMGSHSSGS) are enriched in low complexity. The span at 56-75 (QEAREPVQKKMQDFKGDDGT) shows a compositional bias: basic and acidic residues. Residues 146–175 (ITQQQMKILQTAIEDHETKLKNAKDMCDTF) are a coiled coil.

This sequence belongs to the XLR/SYCP3 family. Expressed in testis (at protein level). Also expressed in ovary. Not detected in other tissues tested.

The protein localises to the nucleus. Its subcellular location is the chromosome. In Mus musculus (Mouse), this protein is X-linked lymphocyte-regulated protein 5C.